Here is a 248-residue protein sequence, read N- to C-terminus: 4-hydroxy-tetrahydrodipicolinate reductase (248 aa).

Residue 13–18 (GITGRL) coordinates NAD(+). Arg36 lines the NADP(+) pocket. NAD(+) contacts are provided by residues 84-86 (GTT) and 108-111 (AANF). His140 functions as the Proton donor/acceptor in the catalytic mechanism. His141 is a binding site for (S)-2,3,4,5-tetrahydrodipicolinate. Lys144 functions as the Proton donor in the catalytic mechanism. (S)-2,3,4,5-tetrahydrodipicolinate is bound at residue 150–151 (GT).

Belongs to the DapB family.

It is found in the cytoplasm. It catalyses the reaction (S)-2,3,4,5-tetrahydrodipicolinate + NAD(+) + H2O = (2S,4S)-4-hydroxy-2,3,4,5-tetrahydrodipicolinate + NADH + H(+). It carries out the reaction (S)-2,3,4,5-tetrahydrodipicolinate + NADP(+) + H2O = (2S,4S)-4-hydroxy-2,3,4,5-tetrahydrodipicolinate + NADPH + H(+). It functions in the pathway amino-acid biosynthesis; L-lysine biosynthesis via DAP pathway; (S)-tetrahydrodipicolinate from L-aspartate: step 4/4. Catalyzes the conversion of 4-hydroxy-tetrahydrodipicolinate (HTPA) to tetrahydrodipicolinate. This is 4-hydroxy-tetrahydrodipicolinate reductase from Gluconobacter oxydans (strain 621H) (Gluconobacter suboxydans).